We begin with the raw amino-acid sequence, 509 residues long: uncharacterized protein (509 aa).

It localises to the virion. This is an uncharacterized protein from Acanthamoeba polyphaga mimivirus (APMV).